A 483-amino-acid polypeptide reads, in one-letter code: BTB/POZ domain and ankyrin repeat-containing protein NBCL (483 aa).

Residues 25–109 form the BTB domain; it reads SDVTFSVEGR…LYSGQVSIVP (85 aa). The C2HC NPR-type zinc finger occupies 115-129; it reads RPNCGERACWHTHCT. Residues Cys-118, Cys-123, His-125, and Cys-128 each coordinate Zn(2+). ANK repeat units lie at residues 254–283, 284–313, 318–347, and 351–385; these read QKIR…LNLD, EALA…DVNY, SGKT…DPNV, and DGVT…KLRL. The disordered stretch occupies residues 401–437; sequence EGNANANSSNNNNAPCSAATPIYPPMNEDHNSSSSNA. Low complexity predominate over residues 403 to 419; sequence NANANSSNNNNAPCSAA.

It belongs to the plant 'ANKYRIN-BTB/POZ' family. 'NOOT-BOP-COCH-like' (NBCL) subfamily. In terms of assembly, homodimer. Interacts with APP1 around the plasma membrane and in the nucleus; this interaction disturbs APP1-mediated regulation of the nuclear transcription factor Y subunit (NF-YA1). As to expression, mainly expressed in root nodules, to a lesser extent in shoot apical meristems (SAM) and root meristems (RM), and barely in leaves, non-nodulating roots and root apical meristems (RAM).

It is found in the nucleus. The protein resides in the cytoplasm. The protein localises to the cell membrane. It participates in protein modification; protein ubiquitination. Functionally, may act as a substrate-specific adapter of an E3 ubiquitin-protein ligase complex (CUL3-RBX1-BTB) which mediates the ubiquitination and subsequent proteasomal degradation of target proteins. Transcriptional co-regulator involved in the promotion of leaf and floral meristem fate and determinacy. Required for the abscission of senescent organs, probably by regulating the cell wall disorganization in abscission zones (AZs, e.g. pulvini at the base of leaves). Involved in the coordination of the symbiotic nodule developmental program; promotes the formation of root nodules by interacting directly with APP1 to modulate the expression of the nuclear transcription factor Y subunit (NF-YA1), a key nodulin. Necessary for the robust maintenance of nodule identity throughout the nodule developmental program. The sequence is that of BTB/POZ domain and ankyrin repeat-containing protein NBCL from Lotus japonicus (Lotus corniculatus var. japonicus).